A 436-amino-acid polypeptide reads, in one-letter code: Trigger factor (436 aa).

The PPIase FKBP-type domain maps to 162 to 247 (GDRVIIDFEG…LNNVSEPTLP (86 aa)).

This sequence belongs to the FKBP-type PPIase family. Tig subfamily.

It is found in the cytoplasm. The enzyme catalyses [protein]-peptidylproline (omega=180) = [protein]-peptidylproline (omega=0). In terms of biological role, involved in protein export. Acts as a chaperone by maintaining the newly synthesized protein in an open conformation. Functions as a peptidyl-prolyl cis-trans isomerase. This is Trigger factor from Neisseria gonorrhoeae (strain ATCC 700825 / FA 1090).